The following is a 190-amino-acid chain: FUN14 domain-containing protein 2 (190 aa).

The span at 1-13 (METSTQRTGSHLA) shows a compositional bias: polar residues. The disordered stretch occupies residues 1-31 (METSTQRTGSHLAQTAAARHSASSRGEAARV). Topologically, residues 1–81 (METSTQRTGS…GQESGPSAEK (81 aa)) are cytoplasmic. Phosphoserine occurs at positions 10 and 54. A helical membrane pass occupies residues 82–102 (YSVATQLLIGGVTGWCTGFIF). The Mitochondrial intermembrane segment spans residues 103 to 108 (QKVGKL). A helical membrane pass occupies residues 109 to 129 (AATAVGGGFFLLQLANHTGYI). Residues 130-165 (KVDWQRVEKDMKKAKEQLKIRKSNQIPTEVKSKAEE) are Cytoplasmic-facing. The residue at position 152 (Ser-152) is a Phosphoserine. A helical transmembrane segment spans residues 166–186 (VVSFVKKNVLVTGGFFGGFLL). Topologically, residues 187-190 (GMAS) are mitochondrial intermembrane.

Belongs to the FUN14 family.

Its subcellular location is the mitochondrion outer membrane. The protein resides in the nucleus. In terms of biological role, binds directly and specifically 1,2-Diacyl-sn-glycero-3-phospho-(1'-myo-inositol-3',4',5'-bisphosphate) (PIP3) leading to the recruitment of PIP3 to mitochondria and may play a role in the regulation of the platelet activation via AKT/GSK3B/cGMP signaling pathways. May act as transcription factor that regulates SREBP1 (isoform SREBP-1C) expression in order to modulate triglyceride (TG) homeostasis in hepatocytes. The sequence is that of FUN14 domain-containing protein 2 from Bos taurus (Bovine).